Here is a 254-residue protein sequence, read N- to C-terminus: Fructose-1,6-bisphosphatase (254 aa).

Residues E68, D84, L86, and D87 each coordinate Mg(2+). Residues 87–89 (DGS), R171, I176, and R195 each bind substrate. A Mg(2+)-binding site is contributed by D202.

This sequence belongs to the inositol monophosphatase superfamily. FBPase class 4 family. As to quaternary structure, homodimer. Mg(2+) is required as a cofactor.

The catalysed reaction is beta-D-fructose 1,6-bisphosphate + H2O = beta-D-fructose 6-phosphate + phosphate. Inhibited by Li(+), ADP, ATP and glucose-6-phosphate. In terms of biological role, catalyzes the conversion of D-fructose 1,6-bisphosphate to D-fructose 6-phosphate. In vitro, also has weak activity with inositol-1-phosphate, glucose-1-phosphate and glycerol-2-phosphate. The polypeptide is Fructose-1,6-bisphosphatase (Pyrococcus furiosus (strain ATCC 43587 / DSM 3638 / JCM 8422 / Vc1)).